A 203-amino-acid chain; its full sequence is Glycerol-3-phosphate acyltransferase (203 aa).

A run of 4 helical transmembrane segments spans residues 6–26, 82–102, 118–138, and 141–161; these read LTLLMIVAAYLAGSVSSAVLV, AISLGLIAIAACLGHIYPIFF, APIGDDLAICLMASWVVLVLI, and YSSLAAIITALLAPLYTWWLD.

It belongs to the PlsY family. In terms of assembly, probably interacts with PlsX.

Its subcellular location is the cell inner membrane. The enzyme catalyses an acyl phosphate + sn-glycerol 3-phosphate = a 1-acyl-sn-glycero-3-phosphate + phosphate. It functions in the pathway lipid metabolism; phospholipid metabolism. In terms of biological role, catalyzes the transfer of an acyl group from acyl-phosphate (acyl-PO(4)) to glycerol-3-phosphate (G3P) to form lysophosphatidic acid (LPA). This enzyme utilizes acyl-phosphate as fatty acyl donor, but not acyl-CoA or acyl-ACP. The polypeptide is Glycerol-3-phosphate acyltransferase (Shewanella sp. (strain MR-4)).